The following is a 285-amino-acid chain: Nucleotide-binding protein Geob_2284 (285 aa).

Position 8–15 (8–15) interacts with ATP; sequence GLSGSGKS. 59–62 provides a ligand contact to GTP; it reads DIRG.

It belongs to the RapZ-like family.

Its function is as follows. Displays ATPase and GTPase activities. In Geotalea daltonii (strain DSM 22248 / JCM 15807 / FRC-32) (Geobacter daltonii), this protein is Nucleotide-binding protein Geob_2284.